A 601-amino-acid chain; its full sequence is DNA ligase (601 aa).

Residue Asp-258 coordinates ATP. The N6-AMP-lysine intermediate role is filled by Lys-260. Residues Arg-265, Arg-280, Glu-310, Phe-350, Arg-427, and Lys-433 each coordinate ATP. The disordered stretch occupies residues 568-601; that stretch reads DKSPEDATTTDEILEMYNKQPKKKIESPPIDESV.

The protein belongs to the ATP-dependent DNA ligase family. Mg(2+) serves as cofactor.

The enzyme catalyses ATP + (deoxyribonucleotide)n-3'-hydroxyl + 5'-phospho-(deoxyribonucleotide)m = (deoxyribonucleotide)n+m + AMP + diphosphate.. In terms of biological role, DNA ligase that seals nicks in double-stranded DNA during DNA replication, DNA recombination and DNA repair. The protein is DNA ligase of Saccharolobus islandicus (strain Y.G.57.14 / Yellowstone #1) (Sulfolobus islandicus).